The primary structure comprises 329 residues: Fructose-1,6-bisphosphatase class 1 (329 aa).

The Mg(2+) site is built by E84, D103, L105, and D106. Substrate-binding positions include 106-109, N196, and K262; that span reads DGSS. E268 is a Mg(2+) binding site.

Belongs to the FBPase class 1 family. Homotetramer. Mg(2+) is required as a cofactor.

Its subcellular location is the cytoplasm. It carries out the reaction beta-D-fructose 1,6-bisphosphate + H2O = beta-D-fructose 6-phosphate + phosphate. The protein operates within carbohydrate biosynthesis; gluconeogenesis. In Shewanella halifaxensis (strain HAW-EB4), this protein is Fructose-1,6-bisphosphatase class 1.